The primary structure comprises 148 residues: Protein-export protein SecB (148 aa).

The protein belongs to the SecB family. Homotetramer, a dimer of dimers. One homotetramer interacts with 1 SecA dimer.

Its subcellular location is the cytoplasm. Its function is as follows. One of the proteins required for the normal export of preproteins out of the cell cytoplasm. It is a molecular chaperone that binds to a subset of precursor proteins, maintaining them in a translocation-competent state. It also specifically binds to its receptor SecA. The protein is Protein-export protein SecB of Psychrobacter arcticus (strain DSM 17307 / VKM B-2377 / 273-4).